Consider the following 206-residue polypeptide: Ribosomal RNA large subunit methyltransferase E (206 aa).

Residues G61, W63, D81, D97, and D122 each contribute to the S-adenosyl-L-methionine site. The Proton acceptor role is filled by K162.

This sequence belongs to the class I-like SAM-binding methyltransferase superfamily. RNA methyltransferase RlmE family.

It localises to the cytoplasm. It carries out the reaction uridine(2552) in 23S rRNA + S-adenosyl-L-methionine = 2'-O-methyluridine(2552) in 23S rRNA + S-adenosyl-L-homocysteine + H(+). Its function is as follows. Specifically methylates the uridine in position 2552 of 23S rRNA at the 2'-O position of the ribose in the fully assembled 50S ribosomal subunit. The polypeptide is Ribosomal RNA large subunit methyltransferase E (Neisseria meningitidis serogroup C (strain 053442)).